A 134-amino-acid polypeptide reads, in one-letter code: ATP synthase epsilon chain, plastid (134 aa).

Belongs to the ATPase epsilon chain family. In terms of assembly, F-type ATPases have 2 components, CF(1) - the catalytic core - and CF(0) - the membrane proton channel. CF(1) has five subunits: alpha(3), beta(3), gamma(1), delta(1), epsilon(1). CF(0) has three main subunits: a, b and c.

The protein resides in the plastid membrane. In terms of biological role, produces ATP from ADP in the presence of a proton gradient across the membrane. The protein is ATP synthase epsilon chain, plastid of Prototheca wickerhamii.